The chain runs to 129 residues: MLNFKFLKCVYLCFMVFVRLILIIKFRGKKFMNRKFVISLLFIILTFLLILGCDLSINNDRNKIDGASHFKKKYMDNLNYQCLSKKESEAKNSQIKLDENNNKNHFYSSRVSNVSNYYDRTHISCKKND.

2 consecutive transmembrane segments (helical) span residues phenylalanine 4–isoleucine 24 and valine 37–isoleucine 57.

The protein to B.burgdorferi BBF20.

It localises to the cell membrane. This is an uncharacterized protein from Borreliella burgdorferi (strain ATCC 35210 / DSM 4680 / CIP 102532 / B31) (Borrelia burgdorferi).